The primary structure comprises 335 residues: ATP-dependent 6-phosphofructokinase (335 aa).

Gly11 lines the ATP pocket. 21 to 25 (RAVVR) is an ADP binding site. ATP is bound by residues 72–73 (RY) and 102–105 (GDGS). Asp103 serves as a coordination point for Mg(2+). 125–127 (TID) contributes to the substrate binding site. Asp127 functions as the Proton acceptor in the catalytic mechanism. Arg154 contacts ADP. Residues Arg162 and 169 to 171 (MGR) contribute to the substrate site. Residues 185-187 (GAD) and 213-215 (KKH) each bind ADP. Residues Glu222, Arg244, and 250 to 253 (HIQR) each bind substrate.

The protein belongs to the phosphofructokinase type A (PFKA) family. ATP-dependent PFK group I subfamily. Prokaryotic clade 'B1' sub-subfamily. As to quaternary structure, homotetramer. Requires Mg(2+) as cofactor.

Its subcellular location is the cytoplasm. The catalysed reaction is beta-D-fructose 6-phosphate + ATP = beta-D-fructose 1,6-bisphosphate + ADP + H(+). It functions in the pathway carbohydrate degradation; glycolysis; D-glyceraldehyde 3-phosphate and glycerone phosphate from D-glucose: step 3/4. Allosterically activated by ADP and other diphosphonucleosides, and allosterically inhibited by phosphoenolpyruvate. In terms of biological role, catalyzes the phosphorylation of D-fructose 6-phosphate to fructose 1,6-bisphosphate by ATP, the first committing step of glycolysis. The sequence is that of ATP-dependent 6-phosphofructokinase from Streptococcus pneumoniae (strain CGSP14).